The chain runs to 354 residues: Rhodopsin (354 aa).

Over 1–36 (MNGTEGPNFYIPMSNKTGVVRSPFEYPQYYLAEPWQ) the chain is Extracellular. N-linked (GlcNAc...) asparagine glycosylation is found at Asn-2 and Asn-15. Residues 37 to 61 (YSILCAYMFLLILLGFPINFMTLYV) traverse the membrane as a helical segment. At 62–73 (TIQHKKLRTPLN) the chain is on the cytoplasmic side. Residues 74–96 (YILLNLAFANHFMVLCGFTVTMY) form a helical membrane-spanning segment. The Extracellular segment spans residues 97–110 (SSMNGYFILGATGC). A disulfide bridge connects residues Cys-110 and Cys-187. Residues 111–133 (YVEGFFATLGGEIALWSLVVLAI) form a helical membrane-spanning segment. Positions 134-136 (ERY) match the 'Ionic lock' involved in activated form stabilization motif. Residues 134-152 (ERYVVVCKPMSNFRFSENH) are Cytoplasmic-facing. A helical transmembrane segment spans residues 153–173 (AVMGVAFTWIMALSCAVPPLL). Over 174–202 (GWSRYIPEGMQCSCGVDYYTLKPEVNNES) the chain is Extracellular. A helical membrane pass occupies residues 203–224 (FVIYMFVVHFTIPLIIIFFCYG). Over 225 to 252 (RLVCTVKEAAAQQQESATTQKAEKEVTR) the chain is Cytoplasmic. The chain crosses the membrane as a helical span at residues 253 to 274 (MVIIMVVFFLICWVPYASVAFF). The Extracellular portion of the chain corresponds to 275–286 (IFSNQGSEFGPI). Residues 287–308 (FMTVPAFFAKSSSIYNPVIYIM) form a helical membrane-spanning segment. The residue at position 296 (Lys-296) is an N6-(retinylidene)lysine. Topologically, residues 309-354 (LNKQFRNCMITTLCCGKNPFGEDDASSAATSKTEASSVSSSQVSPA) are cytoplasmic. 2 S-palmitoyl cysteine lipidation sites follow: Cys-322 and Cys-323. Residues 331–354 (DDASSAATSKTEASSVSSSQVSPA) form a disordered region. Positions 334-354 (SSAATSKTEASSVSSSQVSPA) are enriched in low complexity.

This sequence belongs to the G-protein coupled receptor 1 family. Opsin subfamily. Contains one covalently linked retinal chromophore. Upon light absorption, the covalently bound 11-cis-retinal is converted to all-trans-retinal. After hydrolysis of the Schiff base and release of the covalently bound all-trans-retinal, active rhodopsin is regenerated by binding of a fresh molecule of 11-cis-retinal.

It localises to the membrane. The protein localises to the cell projection. It is found in the cilium. The protein resides in the photoreceptor outer segment. Photoreceptor required for image-forming vision at low light intensity. Required for photoreceptor cell viability after birth. Light-induced isomerization of 11-cis to all-trans retinal triggers a conformational change that activates signaling via G-proteins. Subsequent receptor phosphorylation mediates displacement of the bound G-protein alpha subunit by arrestin and terminates signaling. The protein is Rhodopsin (RHO) of Bufo bufo (European toad).